A 336-amino-acid polypeptide reads, in one-letter code: tRNA N6-adenosine threonylcarbamoyltransferase (336 aa).

2 residues coordinate Fe cation: His114 and His118. Residues 136–140, Asp169, Gly182, Asp186, and Asn275 contribute to the substrate site; that span reads LVSGG. Asp301 provides a ligand contact to Fe cation.

The protein belongs to the KAE1 / TsaD family. The cofactor is Fe(2+).

The protein resides in the cytoplasm. It carries out the reaction L-threonylcarbamoyladenylate + adenosine(37) in tRNA = N(6)-L-threonylcarbamoyladenosine(37) in tRNA + AMP + H(+). Its function is as follows. Required for the formation of a threonylcarbamoyl group on adenosine at position 37 (t(6)A37) in tRNAs that read codons beginning with adenine. Is involved in the transfer of the threonylcarbamoyl moiety of threonylcarbamoyl-AMP (TC-AMP) to the N6 group of A37, together with TsaE and TsaB. TsaD likely plays a direct catalytic role in this reaction. In Streptococcus pneumoniae (strain CGSP14), this protein is tRNA N6-adenosine threonylcarbamoyltransferase.